The following is a 98-amino-acid chain: NADH-ubiquinone oxidoreductase chain 4L (98 aa).

A run of 3 helical transmembrane segments spans residues 1–21 (MSPVYFSFSSAFILGLMGLAF), 26–46 (LLSALLCLEGMMLSLFIAIAL), and 61–81 (MILLTFSACEASAGLALLVAA).

It belongs to the complex I subunit 4L family.

It localises to the mitochondrion membrane. The catalysed reaction is a ubiquinone + NADH + 5 H(+)(in) = a ubiquinol + NAD(+) + 4 H(+)(out). Core subunit of the mitochondrial membrane respiratory chain NADH dehydrogenase (Complex I) which catalyzes electron transfer from NADH through the respiratory chain, using ubiquinone as an electron acceptor. Part of the enzyme membrane arm which is embedded in the lipid bilayer and involved in proton translocation. The sequence is that of NADH-ubiquinone oxidoreductase chain 4L (MT-ND4L) from Squalus acanthias (Spiny dogfish).